Consider the following 271-residue polypeptide: MLKIGIVGCGFIGGQICRAIDGGEVSAELYALCDSSESKALELAASLKTCKPSYMKIEELIRGVDLIIESASQNAVRFIVPQALKAGCDVMILSVGALADEELRDTLFGLAKEHNCKLYFPSGAVVGIDGLNSASAAGISSVTLSTRKPPAGLMGAPYVVEHGIELEKLEKKTVLFEGPASEAVKAFPANVNVAATISLAGIGFERTRVKVIADPSLFRNVHEIIVEGEFGKFSTRVENLPSPENPKTSYLAALSAVSTLKKILNPVQIGT.

Positions 124 and 192 each coordinate NAD(+). Histidine 222 is an active-site residue.

It belongs to the L-aspartate dehydrogenase family.

The catalysed reaction is L-aspartate + NADP(+) + H2O = oxaloacetate + NH4(+) + NADPH + H(+). It catalyses the reaction L-aspartate + NAD(+) + H2O = oxaloacetate + NH4(+) + NADH + H(+). The protein operates within cofactor biosynthesis; NAD(+) biosynthesis; iminoaspartate from L-aspartate (dehydrogenase route): step 1/1. In terms of biological role, specifically catalyzes the NAD or NADP-dependent dehydrogenation of L-aspartate to iminoaspartate. In Methanosarcina acetivorans (strain ATCC 35395 / DSM 2834 / JCM 12185 / C2A), this protein is L-aspartate dehydrogenase.